A 263-amino-acid chain; its full sequence is 3-deoxy-manno-octulosonate cytidylyltransferase 1 (263 aa).

It belongs to the KdsB family.

The protein resides in the cytoplasm. The enzyme catalyses 3-deoxy-alpha-D-manno-oct-2-ulosonate + CTP = CMP-3-deoxy-beta-D-manno-octulosonate + diphosphate. It functions in the pathway nucleotide-sugar biosynthesis; CMP-3-deoxy-D-manno-octulosonate biosynthesis; CMP-3-deoxy-D-manno-octulosonate from 3-deoxy-D-manno-octulosonate and CTP: step 1/1. Its pathway is bacterial outer membrane biogenesis; lipopolysaccharide biosynthesis. Activates KDO (a required 8-carbon sugar) for incorporation into bacterial lipopolysaccharide in Gram-negative bacteria. This Burkholderia ambifaria (strain MC40-6) protein is 3-deoxy-manno-octulosonate cytidylyltransferase 1.